The primary structure comprises 445 residues: Inner membrane metabolite transport protein YgcS (445 aa).

Topologically, residues 1–22 (MNTSPVRMDDLPLNRFHCRIAA) are cytoplasmic. The chain crosses the membrane as a helical span at residues 23–43 (LTFGAHLTDGYVLGVIGYAII). The Periplasmic segment spans residues 44–56 (QLTPAMQLTPFMA). The helical transmembrane segment at 57–77 (GMIGGSALLGLFLGSLVLGWI) threads the bilayer. Residues 78 to 85 (SDHIGRQK) lie on the Cytoplasmic side of the membrane. Residues 86–106 (IFTFSFLLITLASFLQFFATT) form a helical membrane-spanning segment. Residues 107-114 (PEHLIGLR) are Periplasmic-facing. The helical transmembrane segment at 115–135 (ILIGIGLGGDYSVGHTLLAEF) threads the bilayer. The Cytoplasmic segment spans residues 136–142 (SPRRHRG). Residues 143-163 (ILLGAFSVVWTVGYVLASIAG) form a helical membrane-spanning segment. Over 164–175 (HHFISENPEAWR) the chain is Periplasmic. Residues 176-196 (WLLASAALPALLITLLRWGTP) traverse the membrane as a helical segment. Topologically, residues 197–253 (ESPRWLLRQGRFAEAHAIVHRYFGPHVLLGDEVVTATHKHIKTLFSSRYWRRTAFNS) are cytoplasmic. A helical transmembrane segment spans residues 254–274 (VFFVCLVIPWFVIYTWLPTIA). Residues 275–286 (QTIGLEDALTAS) lie on the Periplasmic side of the membrane. A helical membrane pass occupies residues 287-307 (LMLNALLIVGALLGLVLTHLL). The Cytoplasmic portion of the chain corresponds to 308–311 (AHRK). A helical membrane pass occupies residues 312–332 (FLLGSFLLLAATLVVMACLPS). The Periplasmic segment spans residues 333 to 337 (GSSLT). A helical membrane pass occupies residues 338–358 (LLLFVLFSTTISAVSNLVGIL). At 359–369 (PAESFPTDIRS) the chain is on the cytoplasmic side. Residues 370 to 390 (LGVGFATAMSRLGAAVSTGLL) form a helical membrane-spanning segment. Residues 391–400 (PWVLAQWGMQ) are Periplasmic-facing. Residues 401–421 (VTLLLLATVLLVGFVVTWLWA) form a helical membrane-spanning segment. Topologically, residues 422–445 (PETKALPLVAAGNVGGANEHSVSV) are cytoplasmic.

Belongs to the major facilitator superfamily. Sugar transporter (TC 2.A.1.1) family.

The protein localises to the cell inner membrane. The polypeptide is Inner membrane metabolite transport protein YgcS (ygcS) (Escherichia coli (strain K12)).